A 518-amino-acid polypeptide reads, in one-letter code: Membrane-bound lytic murein transglycosylase F (518 aa).

Residues 1–21 (MKKLKINYLFIGILALLLAVA) form the signal peptide. The non-LT domain stretch occupies residues 22–269 (LWPSIPWFGK…RIEEKYLGHG (248 aa)). Residues 270 to 518 (DDFDYVDTRT…SRKGSEEKQN (249 aa)) are LT domain. The active site involves Glu314.

In the N-terminal section; belongs to the bacterial solute-binding protein 3 family. It in the C-terminal section; belongs to the transglycosylase Slt family.

It localises to the cell outer membrane. The catalysed reaction is Exolytic cleavage of the (1-&gt;4)-beta-glycosidic linkage between N-acetylmuramic acid (MurNAc) and N-acetylglucosamine (GlcNAc) residues in peptidoglycan, from either the reducing or the non-reducing ends of the peptidoglycan chains, with concomitant formation of a 1,6-anhydrobond in the MurNAc residue.. Its function is as follows. Murein-degrading enzyme that degrades murein glycan strands and insoluble, high-molecular weight murein sacculi, with the concomitant formation of a 1,6-anhydromuramoyl product. Lytic transglycosylases (LTs) play an integral role in the metabolism of the peptidoglycan (PG) sacculus. Their lytic action creates space within the PG sacculus to allow for its expansion as well as for the insertion of various structures such as secretion systems and flagella. This chain is Membrane-bound lytic murein transglycosylase F, found in Shigella dysenteriae serotype 1 (strain Sd197).